Here is an 84-residue protein sequence, read N- to C-terminus: Small ribosomal subunit protein uS17 (84 aa).

This sequence belongs to the universal ribosomal protein uS17 family. Part of the 30S ribosomal subunit.

Its function is as follows. One of the primary rRNA binding proteins, it binds specifically to the 5'-end of 16S ribosomal RNA. In Shigella boydii serotype 18 (strain CDC 3083-94 / BS512), this protein is Small ribosomal subunit protein uS17.